The following is a 150-amino-acid chain: Large ribosomal subunit protein uL15 (150 aa).

Positions 1 to 57 (MRLEDIRPQAGSTRRRRRLGRGVSAGQGASCGKGMRGQKARKGGSTRPGFEGGQTPL) are disordered. Gly residues predominate over residues 23 to 35 (VSAGQGASCGKGM).

It belongs to the universal ribosomal protein uL15 family. Part of the 50S ribosomal subunit.

Binds to the 23S rRNA. The chain is Large ribosomal subunit protein uL15 from Synechococcus sp. (strain JA-2-3B'a(2-13)) (Cyanobacteria bacterium Yellowstone B-Prime).